The following is a 354-amino-acid chain: AT-rich binding protein (354 aa).

The C2H2-type 1 zinc-finger motif lies at 31-54 (IVCHTCQEELQTQDKFWKHIQDEH). Disordered stretches follow at residues 84-124 (LPLY…HDDQ) and 256-276 (EVQQHKESTNNSTTASASSAM). Composition is skewed to basic and acidic residues over residues 89-100 (KVSENDQQRDDV) and 109-124 (QKEPKDYTEMRAHDDQ). A compositionally biased stretch (low complexity) spans 264-276 (TNNSTTASASSAM). 2 C2H2-type zinc fingers span residues 285 to 309 (YICDFENCGLKFKYHSRLELHRSVH) and 315 to 338 (FACEICGASFKQSCNLSTHRKKKH).

In terms of assembly, homooctamer. As to expression, fat body.

The protein resides in the nucleus. May be a transcription factor for genes having (A+T) stretches in their promoter and/or enhancer regions. Binds to AT rich DNA. In Sarcophaga peregrina (Flesh fly), this protein is AT-rich binding protein.